We begin with the raw amino-acid sequence, 589 residues long: PTS system mannitol-specific EIICB component (589 aa).

The Cytoplasmic portion of the chain corresponds to Met1–Asn25. One can recognise a PTS EIIC type-2 domain in the interval Leu14 to Ser347. Residues Ile26–Asn47 form a helical membrane-spanning segment. Over Glu48 to Ala51 the chain is Extracellular. The helical transmembrane segment at Thr52–Tyr72 threads the bilayer. Residues Met73–Phe135 are Cytoplasmic-facing. A helical transmembrane segment spans residues Ser136–Ser157. Topologically, residues Thr158 to Gly166 are extracellular. A helical membrane pass occupies residues Val167–Lys187. Residues Val188–Ala274 are Cytoplasmic-facing. A helical membrane pass occupies residues Ala275–Lys294. Residues Ser295–His316 lie on the Extracellular side of the membrane. The chain crosses the membrane as a helical span at residues Leu317–Leu338. Over His339–Lys589 the chain is Cytoplasmic. The PTS EIIB type-2 domain occupies Glu381–Glu476. The Phosphocysteine intermediate; for EIIB activity role is filled by Cys387. Cys387 is subject to Phosphocysteine; by EIIA.

Homodimer.

Its subcellular location is the cell membrane. It catalyses the reaction D-mannitol(out) + N(pros)-phospho-L-histidyl-[protein] = D-mannitol 1-phosphate(in) + L-histidyl-[protein]. Its function is as follows. The phosphoenolpyruvate-dependent sugar phosphotransferase system (sugar PTS), a major carbohydrate active transport system, catalyzes the phosphorylation of incoming sugar substrates concomitantly with their translocation across the cell membrane. The enzyme II CmtAB PTS system is involved in D-mannitol transport. The sequence is that of PTS system mannitol-specific EIICB component (mtlA) from Streptococcus pneumoniae (strain ATCC BAA-255 / R6).